The sequence spans 132 residues: UPF0299 membrane protein YohJ (132 aa).

4 helical membrane passes run 5–25 (LNIIWQYLRAFVLIYACLYAG), 26–46 (IFIASLLPVTIPGSIIGMLIL), 63–83 (GCYVLIRYMALLFVPIGVGVM), and 93–113 (FGPVVVSCAVSTLVVFLVVSW).

This sequence belongs to the UPF0299 family.

The protein resides in the cell inner membrane. The polypeptide is UPF0299 membrane protein YohJ (Shigella flexneri serotype 5b (strain 8401)).